The following is a 282-amino-acid chain: MLVCVFVALYTMMGLLTDIKQLQSDFDDEMFEFRAITKDTWQRIVTKHTYPGGVDEETIESHPPTFETLFGTRKARQAYPEQCNCGPKSEGCPAGPPGPPGEGGQSGEPGHDGDDGKPGAPGVIVAITHDIPGGCIKCPPGRPGPRGPSGLVGPAGPAGDQGRHGPPGPTGGQGGPGEQGDAGRPGAAGRPGPPGPRGEPGTEYRPGQAGRAGPPGPRGPPGPEGNPGGAGEDGNQGPVGHPGVPGRPGIPGKSGTCGEHGGPGEPGPDAGYCPCPGRSYKA.

The N-terminal stretch at 1–24 is a signal peptide; the sequence is MLVCVFVALYTMMGLLTDIKQLQS. The tract at residues 86–282 is disordered; that stretch reads GPKSEGCPAG…CPCPGRSYKA (197 aa). Triple-helical region stretches follow at residues 95-124 and 141-269; these read GPPGPPGEGGQSGEPGHDGDDGKPGAPGVI and GRPG…PGPD. Residues 170-180 are compositionally biased toward gly residues; sequence TGGQGGPGEQG. A compositionally biased stretch (pro residues) spans 214–224; sequence PPGPRGPPGPE. Residues 225 to 234 are compositionally biased toward gly residues; the sequence is GNPGGAGEDG. Low complexity predominate over residues 235 to 244; that stretch reads NQGPVGHPGV.

The protein belongs to the cuticular collagen family. In terms of assembly, collagen polypeptide chains are complexed within the cuticle by disulfide bonds and other types of covalent cross-links.

Functionally, nematode cuticles are composed largely of collagen-like proteins. The cuticle functions both as an exoskeleton and as a barrier to protect the worm from its environment. In Caenorhabditis elegans, this protein is Cuticle collagen 8 (col-8).